Consider the following 638-residue polypeptide: 3D-(3,5/4)-trihydroxycyclohexane-1,2-dione hydrolase (638 aa).

Glu67 contacts thiamine diphosphate. The tract at residues 442 to 523 is thiamine pyrophosphate binding; the sequence is SLPGDLQRLW…INIMLFDNSG (82 aa). Positions 494 and 521 each coordinate Mg(2+).

It belongs to the TPP enzyme family. The cofactor is Mg(2+). Thiamine diphosphate is required as a cofactor.

The catalysed reaction is 3D-3,5/4-trihydroxycyclohexane-1,2-dione + H2O = 5-deoxy-D-glucuronate + H(+). Its pathway is polyol metabolism; myo-inositol degradation into acetyl-CoA; acetyl-CoA from myo-inositol: step 3/7. Involved in the cleavage of the C1-C2 bond of 3D-(3,5/4)-trihydroxycyclohexane-1,2-dione (THcHDO) to yield 5-deoxy-glucuronate (5DG). This chain is 3D-(3,5/4)-trihydroxycyclohexane-1,2-dione hydrolase, found in Listeria monocytogenes serovar 1/2a (strain ATCC BAA-679 / EGD-e).